Here is a 188-residue protein sequence, read N- to C-terminus: Large ribosomal subunit protein eL18 (188 aa).

The tract at residues 147-188 is disordered; it reads EANKHFGPAPGVPHSHTKAHVRSKGRQFERARGRRTSKGYKK. 2 stretches are compositionally biased toward basic residues: residues 161–171 and 178–188; these read SHTKAHVRSKG and RGRRTSKGYKK.

This sequence belongs to the eukaryotic ribosomal protein eL18 family.

Its subcellular location is the cytoplasm. This Diaphorina citri (Asian citrus psyllid) protein is Large ribosomal subunit protein eL18 (RpL18).